Consider the following 126-residue polypeptide: Small ribosomal subunit protein uS13 (126 aa).

Residues 95–126 (NLPVHGQRTHTNARTRKGPRRAIAGKKKAGKK) form a disordered region.

It belongs to the universal ribosomal protein uS13 family. Part of the 30S ribosomal subunit. Forms a loose heterodimer with protein S19. Forms two bridges to the 50S subunit in the 70S ribosome.

In terms of biological role, located at the top of the head of the 30S subunit, it contacts several helices of the 16S rRNA. In the 70S ribosome it contacts the 23S rRNA (bridge B1a) and protein L5 of the 50S subunit (bridge B1b), connecting the 2 subunits; these bridges are implicated in subunit movement. Contacts the tRNAs in the A and P-sites. This is Small ribosomal subunit protein uS13 from Frankia casuarinae (strain DSM 45818 / CECT 9043 / HFP020203 / CcI3).